We begin with the raw amino-acid sequence, 395 residues long: MGIKHLFQVIQENAPDAVKSGDIKNHFGRKVAIDASMSIYSFLIAVRSEGQQLMSESGETTSHLMGMFYRTLRMVDNGIKPLYVFDGAPPKLKSGELAKRTARKAEATEAHEEAKETGTAEEIEKFSRRTVRVTREHNAECKKLLKLMGVPYIDAPTEAEAQCAVLARAGKVYAAASEDMDTLCFEAPILLRHLTFSEQRKEPIQEIHLNRVLEGLDMDRSQFIDMCILLGCDYLEPIPKVGPNTALKLIREHGSLEKVVEAIESDPKKKYVIPEDWPYQDARELFHHPDVRAADHPECDFKWEAPDIEALVDFLVKDKGFNEDRVRNGAARLQKNLKTAQQSRLEGFFKPVAKTDAEKASLKRKHDEKLQEQKKRKKEEAKAKKEAKAKPRGAA.

The interval 1 to 104 (MGIKHLFQVI…GELAKRTARK (104 aa)) is N-domain. D34 is a binding site for Mg(2+). The DNA site is built by R47 and R70. D86, E158, E160, D179, and D181 together coordinate Mg(2+). The segment at 122–253 (EIEKFSRRTV…NTALKLIREH (132 aa)) is I-domain. A DNA-binding site is contributed by E158. DNA is bound by residues G231 and D233. Position 233 (D233) interacts with Mg(2+). The interaction with PCNA stretch occupies residues 341–349 (QQSRLEGFF). Basic and acidic residues predominate over residues 356-389 (DAEKASLKRKHDEKLQEQKKRKKEEAKAKKEAKA). Positions 356-395 (DAEKASLKRKHDEKLQEQKKRKKEEAKAKKEAKAKPRGAA) are disordered.

The protein belongs to the XPG/RAD2 endonuclease family. FEN1 subfamily. In terms of assembly, interacts with PCNA. Three molecules of fen1 bind to one PCNA trimer with each molecule binding to one PCNA monomer. PCNA stimulates the nuclease activity without altering cleavage specificity. Mg(2+) is required as a cofactor. Post-translationally, phosphorylated. Phosphorylation upon DNA damage induces relocalization to the nuclear plasma.

It is found in the nucleus. Its subcellular location is the nucleolus. It localises to the nucleoplasm. The protein localises to the mitochondrion. In terms of biological role, structure-specific nuclease with 5'-flap endonuclease and 5'-3' exonuclease activities involved in DNA replication and repair. During DNA replication, cleaves the 5'-overhanging flap structure that is generated by displacement synthesis when DNA polymerase encounters the 5'-end of a downstream Okazaki fragment. It enters the flap from the 5'-end and then tracks to cleave the flap base, leaving a nick for ligation. Also involved in the long patch base excision repair (LP-BER) pathway, by cleaving within the apurinic/apyrimidinic (AP) site-terminated flap. Acts as a genome stabilization factor that prevents flaps from equilibrating into structures that lead to duplications and deletions. Also possesses 5'-3' exonuclease activity on nicked or gapped double-stranded DNA, and exhibits RNase H activity. Also involved in replication and repair of rDNA and in repairing mitochondrial DNA. In Aspergillus clavatus (strain ATCC 1007 / CBS 513.65 / DSM 816 / NCTC 3887 / NRRL 1 / QM 1276 / 107), this protein is Flap endonuclease 1 (fen1).